The primary structure comprises 443 residues: Serine--tRNA ligase (443 aa).

250-252 contacts L-serine; sequence TSE. Position 281–283 (281–283) interacts with ATP; it reads RSE. E304 contacts L-serine. An ATP-binding site is contributed by 368–371; it reads EISS. S403 contacts L-serine.

This sequence belongs to the class-II aminoacyl-tRNA synthetase family. Type-1 seryl-tRNA synthetase subfamily. In terms of assembly, homodimer. The tRNA molecule binds across the dimer.

The protein resides in the cytoplasm. It catalyses the reaction tRNA(Ser) + L-serine + ATP = L-seryl-tRNA(Ser) + AMP + diphosphate + H(+). It carries out the reaction tRNA(Sec) + L-serine + ATP = L-seryl-tRNA(Sec) + AMP + diphosphate + H(+). The protein operates within aminoacyl-tRNA biosynthesis; selenocysteinyl-tRNA(Sec) biosynthesis; L-seryl-tRNA(Sec) from L-serine and tRNA(Sec): step 1/1. Functionally, catalyzes the attachment of serine to tRNA(Ser). Is also able to aminoacylate tRNA(Sec) with serine, to form the misacylated tRNA L-seryl-tRNA(Sec), which will be further converted into selenocysteinyl-tRNA(Sec). This Variovorax paradoxus (strain S110) protein is Serine--tRNA ligase.